A 134-amino-acid polypeptide reads, in one-letter code: Phosphoribosyl-AMP cyclohydrolase (134 aa).

Mg(2+) is bound at residue Asp-78. A Zn(2+)-binding site is contributed by Cys-79. Mg(2+) contacts are provided by Asp-80 and Asp-82. Cys-96 and Cys-103 together coordinate Zn(2+).

This sequence belongs to the PRA-CH family. Homodimer. Requires Mg(2+) as cofactor. It depends on Zn(2+) as a cofactor.

Its subcellular location is the cytoplasm. It catalyses the reaction 1-(5-phospho-beta-D-ribosyl)-5'-AMP + H2O = 1-(5-phospho-beta-D-ribosyl)-5-[(5-phospho-beta-D-ribosylamino)methylideneamino]imidazole-4-carboxamide. It participates in amino-acid biosynthesis; L-histidine biosynthesis; L-histidine from 5-phospho-alpha-D-ribose 1-diphosphate: step 3/9. Catalyzes the hydrolysis of the adenine ring of phosphoribosyl-AMP. This Cupriavidus taiwanensis (strain DSM 17343 / BCRC 17206 / CCUG 44338 / CIP 107171 / LMG 19424 / R1) (Ralstonia taiwanensis (strain LMG 19424)) protein is Phosphoribosyl-AMP cyclohydrolase.